A 437-amino-acid chain; its full sequence is Putative metabolite transport protein NicT (437 aa).

A run of 12 helical transmembrane segments spans residues 28–48, 66–86, 93–113, 123–143, 152–172, 189–209, 254–274, 290–310, 320–340, 347–367, 374–394, and 411–431; these read LIPF…NVGF, LGAG…NLIL, LWIA…MFVT, FLLG…LTMW, IIAL…PISG, WLFL…FWAL, VWML…MGFW, IGLL…MIGA, WHII…TLFS, VVLF…FFSL, GTAA…AGLV, and AALW…IALP.

The protein belongs to the major facilitator superfamily.

Its subcellular location is the membrane. In terms of biological role, probable transporter, possibly involved in the aerobic nicotinate degradation pathway. The sequence is that of Putative metabolite transport protein NicT (nicT) from Pseudomonas putida (strain ATCC 47054 / DSM 6125 / CFBP 8728 / NCIMB 11950 / KT2440).